The sequence spans 92 residues: UPF0125 protein NMA1005 (92 aa).

Belongs to the UPF0125 (RnfH) family.

This is UPF0125 protein NMA1005 from Neisseria meningitidis serogroup A / serotype 4A (strain DSM 15465 / Z2491).